We begin with the raw amino-acid sequence, 245 residues long: MYIVIDQGNTILKIGLFEGKAVIKTFQTKEVKQEWFYSILKTYQPQAGILCSTREVSESLLSLLRESLSYFYEFKNNLPLPLSIDYQTPRTLGTDRLAAAVGAWYQKLNNNLLIIDIGTAITIDFVNRKGIYKGGNISLGPAMRLNALHYFTNSLPLISENGNIPIRGYDTETAIRSGVMEGIVHELGSYIEEYEKKENALTFLTGGNTIYFEKRLKGTLFVDKHLVLKGLNEILIYQKKFFKSK.

6–13 (DQGNTILK) is an ATP binding site. Substrate contacts are provided by residues Y86 and 93–96 (GTDR). The active-site Proton acceptor is D95. A K(+)-binding site is contributed by D116. Residue T119 coordinates ATP. T171 contributes to the substrate binding site.

The protein belongs to the type III pantothenate kinase family. Homodimer. The cofactor is NH4(+). It depends on K(+) as a cofactor.

It localises to the cytoplasm. The enzyme catalyses (R)-pantothenate + ATP = (R)-4'-phosphopantothenate + ADP + H(+). It functions in the pathway cofactor biosynthesis; coenzyme A biosynthesis; CoA from (R)-pantothenate: step 1/5. Functionally, catalyzes the phosphorylation of pantothenate (Pan), the first step in CoA biosynthesis. The sequence is that of Type III pantothenate kinase from Azobacteroides pseudotrichonymphae genomovar. CFP2.